The sequence spans 495 residues: Potassium voltage-gated channel subfamily A member 1 (495 aa).

The tract at residues 1 to 30 (MTVMSGENADEASAAPGHPQDGSYPRQADH) is disordered. Residues 1 to 128 (MTVMSGENAD…FYELGEEAME (128 aa)) are tetramerization domain. Topologically, residues 1–164 (MTVMSGENAD…LLFEYPESSG (164 aa)) are cytoplasmic. Position 23 is a phosphoserine (Ser23). Residues 165 to 186 (PARVIAIVSVMVILISIVIFCL) form a helical membrane-spanning segment. Topologically, residues 187–220 (ETLPELKDDKDFTGTIHRIDNTTVIYTSNIFTDP) are extracellular. The N-linked (GlcNAc...) asparagine glycan is linked to Asn207. A helical transmembrane segment spans residues 221-242 (FFIVETLCIIWFSFELVVRFFA). Cys243 carries S-palmitoyl cysteine lipidation. At 243–253 (CPSKTDFFKNI) the chain is on the cytoplasmic side. A helical transmembrane segment spans residues 254 to 274 (MNFIDIVAIIPYFITLGTEIA). The Extracellular portion of the chain corresponds to 275–287 (EQEGNQKGEQATS). A helical; Voltage-sensor membrane pass occupies residues 288–308 (LAILRVIRLVRVFRIFKLSRH). Residues 309–323 (SKGLQILGQTLKASM) are Cytoplasmic-facing. The segment at 310 to 323 (KGLQILGQTLKASM) is S4-S5 linker. Ser322 carries the post-translational modification Phosphoserine; by PKA. The helical transmembrane segment at 324–345 (RELGLLIFFLFIGVILFSSAVY) threads the bilayer. Residues 346 to 359 (FAEAEEAESHFSSI) lie on the Extracellular side of the membrane. Positions 360–371 (PDAFWWAVVSMT) form an intramembrane region, helical. The Selectivity filter signature appears at 372–377 (TVGYGD). The stretch at 372-379 (TVGYGDMY) is an intramembrane region. Topologically, residues 380–386 (PVTIGGK) are extracellular. A helical membrane pass occupies residues 387 to 415 (IVGSLCAIAGVLTIALPVPVIVSNFNYFY). Residues 416–495 (HRETEGEEQA…VNKSKLLTDV (80 aa)) are Cytoplasmic-facing. Ser437 and Ser439 each carry phosphoserine. At Ser446 the chain carries Phosphoserine; by PKA. The short motif at 493–495 (TDV) is the PDZ-binding element.

The protein belongs to the potassium channel family. A (Shaker) (TC 1.A.1.2) subfamily. Kv1.1/KCNA1 sub-subfamily. As to quaternary structure, homotetramer and heterotetramer with other channel-forming alpha subunits, such as KCNA2, KCNA4, KCNA5, KCNA6 and KCNA7. Channel activity is regulated by interaction with the beta subunits KCNAB1 and KCNAB2. Identified in a complex with KCNA2 and KCNAB2. Interacts (via C-terminus) with the PDZ domains of DLG1, DLG2 and DLG4. Interacts with LGI1 within a complex containing LGI1, KCNA4 and KCNAB1. Interacts (via cytoplasmic N-terminal domain) with KCNRG; this inhibits channel activity. Interacts with ANK3; this inhibits channel activity. Interacts (via N-terminus) with STX1A; this promotes channel inactivation. Interacts (via N-terminus) with the heterodimer formed by GNB1 and GNG2; this promotes channel inactivation. Can interact simultaneously with STX1A and the heterodimer formed by GNB1 and GNG2. Interacts with ADAM11. Post-translationally, palmitoylated on Cys-243; which may be required for membrane targeting. In terms of processing, N-glycosylated. Phosphorylated on tyrosine residues. Phosphorylation increases in response to NRG1; this inhibits channel activity. Phosphorylated by PKA. Phosphorylation at Ser-446 regulates channel activity by down-regulating expression at the cell membrane. Detected in hippocampus, in the middle third of the molecular layer of the dentate gyrus and in stratum radiatum and stratum oriens. Detected in the mossy fiber zone in the hippocampus CA3 region, at or near axon terminals. Detected in brain cortex, at basket cell terminals. Detected adjacent to nodes of Ranvier in juxtaparanodal zones in spinal cord nerve fibers, but also in paranodal regions in some myelinated spinal cord axons. Detected in juxtaparanodal regions adjacent to the nodes of Ranvier in myelinated axons in cerebellar white matter. Detected in sensory neurons. Detected in neurons from the medial nucleus of the trapezoid body. Detected in basolateral amygdala. Detected in the paraventricular nucleus of the hypothalamus. Detected in the islet of Langerhans (at protein level).

Its subcellular location is the cell membrane. The protein resides in the membrane. It localises to the cell projection. It is found in the axon. The protein localises to the cytoplasmic vesicle. Its subcellular location is the perikaryon. The protein resides in the endoplasmic reticulum. It localises to the dendrite. It is found in the cell junction. The protein localises to the synapse. Its subcellular location is the presynapse. The protein resides in the presynaptic cell membrane. It catalyses the reaction K(+)(in) = K(+)(out). With respect to regulation, inhibited by 4-aminopyridine (4-AP) and by tetraethylammonium (TEA). Inhibited by kaliotoxin (KTX). In terms of biological role, voltage-gated potassium channel that mediates transmembrane potassium transport in excitable membranes, primarily in the brain and the central nervous system, but also in the kidney. Contributes to the regulation of the membrane potential and nerve signaling, and prevents neuronal hyperexcitability. Forms tetrameric potassium-selective channels through which potassium ions pass in accordance with their electrochemical gradient. The channel alternates between opened and closed conformations in response to the voltage difference across the membrane. Can form functional homotetrameric channels and heterotetrameric channels that contain variable proportions of KCNA1, KCNA2, KCNA4, KCNA5, KCNA6, KCNA7, and possibly other family members as well; channel properties depend on the type of alpha subunits that are part of the channel. Channel properties are modulated by cytoplasmic beta subunits that regulate the subcellular location of the alpha subunits and promote rapid inactivation of delayed rectifier potassium channels. In vivo, membranes probably contain a mixture of heteromeric potassium channel complexes, making it difficult to assign currents observed in intact tissues to any particular potassium channel family member. Homotetrameric KCNA1 forms a delayed-rectifier potassium channel that opens in response to membrane depolarization, followed by slow spontaneous channel closure. In contrast, a heterotetrameric channel formed by KCNA1 and KCNA4 shows rapid inactivation. Regulates neuronal excitability in hippocampus, especially in mossy fibers and medial perforant path axons, preventing neuronal hyperexcitability. Response to toxins that are selective for KCNA1, respectively for KCNA2, suggests that heteromeric potassium channels composed of both KCNA1 and KCNA2 play a role in pacemaking and regulate the output of deep cerebellar nuclear neurons. May function as down-stream effector for G protein-coupled receptors and inhibit GABAergic inputs to basolateral amygdala neurons. May contribute to the regulation of neurotransmitter release, such as gamma-aminobutyric acid (GABA) release. Plays a role in regulating the generation of action potentials and preventing hyperexcitability in myelinated axons of the vagus nerve, and thereby contributes to the regulation of heart contraction. Required for normal neuromuscular responses. Regulates the frequency of neuronal action potential firing in response to mechanical stimuli, and plays a role in the perception of pain caused by mechanical stimuli, but does not play a role in the perception of pain due to heat stimuli. Required for normal responses to auditory stimuli and precise location of sound sources, but not for sound perception. The use of toxins that block specific channels suggest that it contributes to the regulation of the axonal release of the neurotransmitter dopamine. Required for normal postnatal brain development and normal proliferation of neuronal precursor cells in the brain. Plays a role in the reabsorption of Mg(2+) in the distal convoluted tubules in the kidney and in magnesium ion homeostasis, probably via its effect on the membrane potential. The protein is Potassium voltage-gated channel subfamily A member 1 of Rattus norvegicus (Rat).